The following is a 117-amino-acid chain: Small ribosomal subunit protein uS8c (117 aa).

It belongs to the universal ribosomal protein uS8 family. As to quaternary structure, part of the 30S ribosomal subunit.

The protein localises to the plastid. It is found in the chloroplast. In terms of biological role, one of the primary rRNA binding proteins, it binds directly to 16S rRNA central domain where it helps coordinate assembly of the platform of the 30S subunit. The protein is Small ribosomal subunit protein uS8c (rps8) of Cyanidioschyzon merolae (strain NIES-3377 / 10D) (Unicellular red alga).